The following is a 237-amino-acid chain: Orotidine 5'-phosphate decarboxylase (237 aa).

Residues aspartate 17, lysine 39, 66 to 75 (DLKLHDIGNT), threonine 121, arginine 182, glutamine 191, glycine 211, and arginine 212 contribute to the substrate site. Residue lysine 68 is the Proton donor of the active site.

This sequence belongs to the OMP decarboxylase family. Type 1 subfamily. In terms of assembly, homodimer.

The catalysed reaction is orotidine 5'-phosphate + H(+) = UMP + CO2. The protein operates within pyrimidine metabolism; UMP biosynthesis via de novo pathway; UMP from orotate: step 2/2. In terms of biological role, catalyzes the decarboxylation of orotidine 5'-monophosphate (OMP) to uridine 5'-monophosphate (UMP). This Bradyrhizobium diazoefficiens (strain JCM 10833 / BCRC 13528 / IAM 13628 / NBRC 14792 / USDA 110) protein is Orotidine 5'-phosphate decarboxylase.